The chain runs to 469 residues: Transcription factor SOX-10 (469 aa).

5 disordered regions span residues 1–70 (MAEE…DDDK), 163–203 (LRMQ…QGGA), 215–278 (LDHR…DFGN), 357–378 (AQVKTETAGPQGPSHYSDQPST), and 436–469 (RPLYTAISDPSPSGPQSHSPTHWEQPVYTTLSRP). A compositionally biased stretch (low complexity) spans 23 to 32 (LSPGSAPSLG). S24 is subject to Phosphoserine. The segment covering 33-44 (PDGGGGGGGGSG) has biased composition (gly residues). The dimerization (DIM) stretch occupies residues 65-105 (EADDDKFPVCIREAVSQVLSGYDWTLVPMPVRVNGASKSKP). The segment at residues 107 to 175 (VKRPMNAFMV…QHKKDHPDYK (69 aa)) is a DNA-binding region (HMG box). Composition is skewed to basic and acidic residues over residues 163-176 (LRMQHKKDHPDYKY) and 257-274 (ADPKRDGRSMGEGGKPHI). The interval 231–313 (PEHPSGQSHG…LPPNGHPGHV (83 aa)) is transactivation domain (TAM). Positions 356 to 469 (KAQVKTETAG…QPVYTTLSRP (114 aa)) are transactivation domain (TAC). Over residues 443-469 (SDPSPSGPQSHSPTHWEQPVYTTLSRP) the composition is skewed to polar residues.

In terms of assembly, monomer. Interacts with ARMCX3 at the mitochondrial outer membrane surface. Interacts with PAX3.

It is found in the cytoplasm. It localises to the nucleus. The protein localises to the mitochondrion outer membrane. Functionally, transcription factor that plays a central role in developing and mature glia. Specifically activates expression of myelin genes, during oligodendrocyte (OL) maturation, such as DUSP15 and MYRF, thereby playing a central role in oligodendrocyte maturation and CNS myelination. Once induced, MYRF cooperates with SOX10 to implement the myelination program. Transcriptional activator of MITF, acting synergistically with PAX3. Transcriptional activator of MBP, via binding to the gene promoter. This chain is Transcription factor SOX-10 (SOX10), found in Sus scrofa (Pig).